A 147-amino-acid chain; its full sequence is Diaminohydroxyphosphoribosylamino-pyrimidine deaminase (147 aa).

The 123-residue stretch at 1 to 123 folds into the CMP/dCMP-type deaminase domain; it reads MNDIFYMKRA…YLKKHGICVK (123 aa). His-50 lines the Zn(2+) pocket. Glu-52 (proton donor) is an active-site residue. Residues Cys-75 and Cys-84 each coordinate Zn(2+).

Belongs to the cytidine and deoxycytidylate deaminase family. It depends on Zn(2+) as a cofactor.

The enzyme catalyses 2,5-diamino-6-hydroxy-4-(5-phosphoribosylamino)-pyrimidine + H2O + H(+) = 5-amino-6-(5-phospho-D-ribosylamino)uracil + NH4(+). It functions in the pathway cofactor biosynthesis; riboflavin biosynthesis; 5-amino-6-(D-ribitylamino)uracil from GTP: step 2/4. This Buchnera aphidicola subsp. Acyrthosiphon pisum (strain APS) (Acyrthosiphon pisum symbiotic bacterium) protein is Diaminohydroxyphosphoribosylamino-pyrimidine deaminase (ribD1).